A 463-amino-acid chain; its full sequence is Phosphoglucosamine mutase (463 aa).

Catalysis depends on S102, which acts as the Phosphoserine intermediate. Mg(2+)-binding residues include S102, D240, D242, and D244. At S102 the chain carries Phosphoserine.

The protein belongs to the phosphohexose mutase family. It depends on Mg(2+) as a cofactor. Activated by phosphorylation.

It carries out the reaction alpha-D-glucosamine 1-phosphate = D-glucosamine 6-phosphate. In terms of biological role, catalyzes the conversion of glucosamine-6-phosphate to glucosamine-1-phosphate. The polypeptide is Phosphoglucosamine mutase (Mycobacterium leprae (strain Br4923)).